A 576-amino-acid polypeptide reads, in one-letter code: Arginine--tRNA ligase (576 aa).

The 'HIGH' region signature appears at alanine 126–histidine 136.

Belongs to the class-I aminoacyl-tRNA synthetase family. Monomer.

It is found in the cytoplasm. It catalyses the reaction tRNA(Arg) + L-arginine + ATP = L-arginyl-tRNA(Arg) + AMP + diphosphate. The sequence is that of Arginine--tRNA ligase from Rickettsia akari (strain Hartford).